Consider the following 269-residue polypeptide: Formamidopyrimidine-DNA glycosylase (269 aa).

Proline 2 serves as the catalytic Schiff-base intermediate with DNA. Glutamate 3 acts as the Proton donor in catalysis. Catalysis depends on lysine 57, which acts as the Proton donor; for beta-elimination activity. Residues histidine 90, arginine 109, and lysine 150 each coordinate DNA. An FPG-type zinc finger spans residues 235 to 269 (QVYGRKGEPCRVCGTPIVATKHAQRATFYCRQCQK). Arginine 259 acts as the Proton donor; for delta-elimination activity in catalysis.

It belongs to the FPG family. Monomer. The cofactor is Zn(2+).

The enzyme catalyses Hydrolysis of DNA containing ring-opened 7-methylguanine residues, releasing 2,6-diamino-4-hydroxy-5-(N-methyl)formamidopyrimidine.. It carries out the reaction 2'-deoxyribonucleotide-(2'-deoxyribose 5'-phosphate)-2'-deoxyribonucleotide-DNA = a 3'-end 2'-deoxyribonucleotide-(2,3-dehydro-2,3-deoxyribose 5'-phosphate)-DNA + a 5'-end 5'-phospho-2'-deoxyribonucleoside-DNA + H(+). Involved in base excision repair of DNA damaged by oxidation or by mutagenic agents. Acts as a DNA glycosylase that recognizes and removes damaged bases. Has a preference for oxidized purines, such as 7,8-dihydro-8-oxoguanine (8-oxoG). Has AP (apurinic/apyrimidinic) lyase activity and introduces nicks in the DNA strand. Cleaves the DNA backbone by beta-delta elimination to generate a single-strand break at the site of the removed base with both 3'- and 5'-phosphates. This chain is Formamidopyrimidine-DNA glycosylase, found in Escherichia coli (strain 55989 / EAEC).